Here is a 188-residue protein sequence, read N- to C-terminus: RNA 2',3'-cyclic phosphodiesterase (188 aa).

The active-site Proton donor is the His-42. Short sequence motifs (HXTX) lie at residues 42–45 (HMTL) and 130–133 (HVTI). His-130 serves as the catalytic Proton acceptor.

It belongs to the 2H phosphoesterase superfamily. ThpR family.

It catalyses the reaction a 3'-end 2',3'-cyclophospho-ribonucleotide-RNA + H2O = a 3'-end 2'-phospho-ribonucleotide-RNA + H(+). Functionally, hydrolyzes RNA 2',3'-cyclic phosphodiester to an RNA 2'-phosphomonoester. This is RNA 2',3'-cyclic phosphodiesterase from Aquifex aeolicus (strain VF5).